A 173-amino-acid polypeptide reads, in one-letter code: Crossover junction endodeoxyribonuclease RuvC (173 aa).

Catalysis depends on residues Asp-8, Glu-67, and Asp-139. Mg(2+) contacts are provided by Asp-8, Glu-67, and Asp-139.

This sequence belongs to the RuvC family. In terms of assembly, homodimer which binds Holliday junction (HJ) DNA. The HJ becomes 2-fold symmetrical on binding to RuvC with unstacked arms; it has a different conformation from HJ DNA in complex with RuvA. In the full resolvosome a probable DNA-RuvA(4)-RuvB(12)-RuvC(2) complex forms which resolves the HJ. It depends on Mg(2+) as a cofactor.

It localises to the cytoplasm. It carries out the reaction Endonucleolytic cleavage at a junction such as a reciprocal single-stranded crossover between two homologous DNA duplexes (Holliday junction).. In terms of biological role, the RuvA-RuvB-RuvC complex processes Holliday junction (HJ) DNA during genetic recombination and DNA repair. Endonuclease that resolves HJ intermediates. Cleaves cruciform DNA by making single-stranded nicks across the HJ at symmetrical positions within the homologous arms, yielding a 5'-phosphate and a 3'-hydroxyl group; requires a central core of homology in the junction. The consensus cleavage sequence is 5'-(A/T)TT(C/G)-3'. Cleavage occurs on the 3'-side of the TT dinucleotide at the point of strand exchange. HJ branch migration catalyzed by RuvA-RuvB allows RuvC to scan DNA until it finds its consensus sequence, where it cleaves and resolves the cruciform DNA. This Citrobacter koseri (strain ATCC BAA-895 / CDC 4225-83 / SGSC4696) protein is Crossover junction endodeoxyribonuclease RuvC.